The sequence spans 292 residues: Galactinol synthase 2 (292 aa).

Residue lysine 65 is part of the active site. Residues aspartate 81, aspartate 83, and histidine 218 each contribute to the Mn(2+) site.

It belongs to the glycosyltransferase 8 family. Galactosyltransferase subfamily. It depends on a divalent metal cation as a cofactor. In terms of tissue distribution, present in phloem-associated intermediary cells. Weakly expressed in leaves.

It is found in the cytoplasm. It carries out the reaction myo-inositol + UDP-alpha-D-galactose = alpha-D-galactosyl-(1-&gt;3)-1D-myo-inositol + UDP + H(+). In terms of biological role, may promote plant stress tolerance. Galactinol synthase mainly involved in the biosynthesis of transport raffinose family oligosaccharides (RFOs) that function as osmoprotectants. The polypeptide is Galactinol synthase 2 (GOLS2) (Ajuga reptans (Bugle)).